The primary structure comprises 337 residues: Phosphate acyltransferase (337 aa).

This sequence belongs to the PlsX family. Homodimer. Probably interacts with PlsY.

The protein resides in the cytoplasm. The enzyme catalyses a fatty acyl-[ACP] + phosphate = an acyl phosphate + holo-[ACP]. It participates in lipid metabolism; phospholipid metabolism. In terms of biological role, catalyzes the reversible formation of acyl-phosphate (acyl-PO(4)) from acyl-[acyl-carrier-protein] (acyl-ACP). This enzyme utilizes acyl-ACP as fatty acyl donor, but not acyl-CoA. This Listeria innocua serovar 6a (strain ATCC BAA-680 / CLIP 11262) protein is Phosphate acyltransferase.